Consider the following 1140-residue polypeptide: Protein FAM184A (1140 aa).

3 coiled-coil regions span residues Ala-57–Gln-256, Ala-296–Glu-800, and Arg-868–Lys-907. The disordered stretch occupies residues Pro-1063–Pro-1128.

Belongs to the FAM184 family.

It is found in the cytoplasm. Its subcellular location is the P-body. It localises to the cytoskeleton. The protein resides in the microtubule organizing center. The protein localises to the centrosome. It is found in the centriolar satellite. The protein is Protein FAM184A of Homo sapiens (Human).